Reading from the N-terminus, the 147-residue chain is Nucleoside diphosphate kinase (147 aa).

ATP contacts are provided by Lys9, Phe57, Arg85, Thr91, Arg102, and Asn112. Catalysis depends on His115, which acts as the Pros-phosphohistidine intermediate.

Belongs to the NDK family. As to quaternary structure, homotetramer. Requires Mg(2+) as cofactor.

It localises to the cytoplasm. The enzyme catalyses a 2'-deoxyribonucleoside 5'-diphosphate + ATP = a 2'-deoxyribonucleoside 5'-triphosphate + ADP. The catalysed reaction is a ribonucleoside 5'-diphosphate + ATP = a ribonucleoside 5'-triphosphate + ADP. Functionally, major role in the synthesis of nucleoside triphosphates other than ATP. The ATP gamma phosphate is transferred to the NDP beta phosphate via a ping-pong mechanism, using a phosphorylated active-site intermediate. This chain is Nucleoside diphosphate kinase, found in Thermosipho africanus (strain TCF52B).